Reading from the N-terminus, the 930-residue chain is Isoleucine--tRNA ligase (930 aa).

The segment at 1–21 (MRVKDTLNLGKTKFPMRGRLP) is disordered. Residues 57-67 (PYANGPIHIGH) carry the 'HIGH' region motif. Residue glutamate 555 participates in L-isoleucyl-5'-AMP binding. The 'KMSKS' region signature appears at 596–600 (KMSKS). ATP is bound at residue lysine 599. Residues cysteine 889, cysteine 892, cysteine 909, and cysteine 912 each coordinate Zn(2+).

It belongs to the class-I aminoacyl-tRNA synthetase family. IleS type 1 subfamily. As to quaternary structure, monomer. It depends on Zn(2+) as a cofactor.

It is found in the cytoplasm. It carries out the reaction tRNA(Ile) + L-isoleucine + ATP = L-isoleucyl-tRNA(Ile) + AMP + diphosphate. In terms of biological role, catalyzes the attachment of isoleucine to tRNA(Ile). As IleRS can inadvertently accommodate and process structurally similar amino acids such as valine, to avoid such errors it has two additional distinct tRNA(Ile)-dependent editing activities. One activity is designated as 'pretransfer' editing and involves the hydrolysis of activated Val-AMP. The other activity is designated 'posttransfer' editing and involves deacylation of mischarged Val-tRNA(Ile). This chain is Isoleucine--tRNA ligase, found in Limosilactobacillus fermentum (strain NBRC 3956 / LMG 18251) (Lactobacillus fermentum).